The sequence spans 34 residues: Calcitonin-like peptide 1 (34 aa).

An intrachain disulfide couples C2 to C7. Position 34 is a proline amide (P34).

In Odorrana schmackeri (Schmacker's frog), this protein is Calcitonin-like peptide 1.